The sequence spans 389 residues: Chalcone synthase 8 (389 aa).

C164 is a catalytic residue.

The protein belongs to the thiolase-like superfamily. Chalcone/stilbene synthases family.

It carries out the reaction (E)-4-coumaroyl-CoA + 3 malonyl-CoA + 3 H(+) = 2',4,4',6'-tetrahydroxychalcone + 3 CO2 + 4 CoA. The protein operates within secondary metabolite biosynthesis; flavonoid biosynthesis. In terms of biological role, the primary product of this enzyme is 4,2',4',6'-tetrahydroxychalcone (also termed naringenin-chalcone or chalcone) which can under specific conditions spontaneously isomerize into naringenin. This is Chalcone synthase 8 (CHS8) from Medicago sativa (Alfalfa).